The following is a 159-amino-acid chain: IQ domain-containing protein J (159 aa).

The 21-residue stretch at 47-67 folds into the IQ domain; it reads ESKVKIIQRAWREYLQRQEPL. Residues 63 to 88 form a disordered region; the sequence is RQEPLGKRSPSPPSVSSEKLSSSVSM. The span at 76 to 87 shows a compositional bias: low complexity; that stretch reads SVSSEKLSSSVS.

This is IQ domain-containing protein J from Homo sapiens (Human).